A 157-amino-acid chain; its full sequence is MFEVLIYLFETYVHSGSEISIDYKNLTSDLSDIGFRSKDIYKALHWLKNLSCCKKNIFSSINLSLNHTTNRIYTKKEEFKLNSDCRGFILFLEELEILTLNTREIIIERIMALDISHVNIEDLKWIVLIILFNIPGCEVVYRKLENLLFNFKKEIVH.

This sequence belongs to the Smg family.

This Buchnera aphidicola subsp. Schizaphis graminum (strain Sg) protein is Protein Smg.